A 160-amino-acid polypeptide reads, in one-letter code: tRNA (cytidine(34)-2'-O)-methyltransferase (160 aa).

S-adenosyl-L-methionine-binding residues include L78, G100, I122, and S130.

It belongs to the class IV-like SAM-binding methyltransferase superfamily. RNA methyltransferase TrmH family. TrmL subfamily. As to quaternary structure, homodimer.

The protein resides in the cytoplasm. The enzyme catalyses cytidine(34) in tRNA + S-adenosyl-L-methionine = 2'-O-methylcytidine(34) in tRNA + S-adenosyl-L-homocysteine + H(+). It catalyses the reaction 5-carboxymethylaminomethyluridine(34) in tRNA(Leu) + S-adenosyl-L-methionine = 5-carboxymethylaminomethyl-2'-O-methyluridine(34) in tRNA(Leu) + S-adenosyl-L-homocysteine + H(+). Its function is as follows. Methylates the ribose at the nucleotide 34 wobble position in the two leucyl isoacceptors tRNA(Leu)(CmAA) and tRNA(Leu)(cmnm5UmAA). Catalyzes the methyl transfer from S-adenosyl-L-methionine to the 2'-OH of the wobble nucleotide. The sequence is that of tRNA (cytidine(34)-2'-O)-methyltransferase from Haemophilus influenzae (strain ATCC 51907 / DSM 11121 / KW20 / Rd).